The sequence spans 165 residues: Phosphopantetheine adenylyltransferase (165 aa).

Ser10 serves as a coordination point for substrate. Residues 10–11 (SF) and His18 each bind ATP. Residues Lys42, Thr79, and Arg93 each contribute to the substrate site. ATP is bound by residues 94-96 (GLR), Glu104, and 129-135 (VRPITAT).

It belongs to the bacterial CoaD family. Homohexamer. The cofactor is Mg(2+).

It localises to the cytoplasm. The catalysed reaction is (R)-4'-phosphopantetheine + ATP + H(+) = 3'-dephospho-CoA + diphosphate. The protein operates within cofactor biosynthesis; coenzyme A biosynthesis; CoA from (R)-pantothenate: step 4/5. In terms of biological role, reversibly transfers an adenylyl group from ATP to 4'-phosphopantetheine, yielding dephospho-CoA (dPCoA) and pyrophosphate. In Nitrobacter hamburgensis (strain DSM 10229 / NCIMB 13809 / X14), this protein is Phosphopantetheine adenylyltransferase.